A 333-amino-acid polypeptide reads, in one-letter code: Lipoyl synthase (333 aa).

The span at 1-15 shows a compositional bias: polar residues; sequence MSTLVESPVPSNDSQ. The segment at 1–34 is disordered; it reads MSTLVESPVPSNDSQAAAPAAYDPTQKQKSQAKT. [4Fe-4S] cluster-binding residues include Cys-80, Cys-85, Cys-91, Cys-106, Cys-110, Cys-113, and Ser-320. Residues 91–309 form the Radical SAM core domain; that stretch reads CFGKGTATFM…EREAYAMGFT (219 aa).

The protein belongs to the radical SAM superfamily. Lipoyl synthase family. It depends on [4Fe-4S] cluster as a cofactor.

The protein localises to the cytoplasm. It carries out the reaction [[Fe-S] cluster scaffold protein carrying a second [4Fe-4S](2+) cluster] + N(6)-octanoyl-L-lysyl-[protein] + 2 oxidized [2Fe-2S]-[ferredoxin] + 2 S-adenosyl-L-methionine + 4 H(+) = [[Fe-S] cluster scaffold protein] + N(6)-[(R)-dihydrolipoyl]-L-lysyl-[protein] + 4 Fe(3+) + 2 hydrogen sulfide + 2 5'-deoxyadenosine + 2 L-methionine + 2 reduced [2Fe-2S]-[ferredoxin]. Its pathway is protein modification; protein lipoylation via endogenous pathway; protein N(6)-(lipoyl)lysine from octanoyl-[acyl-carrier-protein]: step 2/2. Its function is as follows. Catalyzes the radical-mediated insertion of two sulfur atoms into the C-6 and C-8 positions of the octanoyl moiety bound to the lipoyl domains of lipoate-dependent enzymes, thereby converting the octanoylated domains into lipoylated derivatives. This Bordetella parapertussis (strain 12822 / ATCC BAA-587 / NCTC 13253) protein is Lipoyl synthase.